Here is a 149-residue protein sequence, read N- to C-terminus: Nucleoside diphosphate kinase (149 aa).

ATP is bound by residues lysine 9, phenylalanine 57, arginine 85, threonine 91, arginine 102, and asparagine 112. The Pros-phosphohistidine intermediate role is filled by histidine 115.

It belongs to the NDK family. Homotetramer. Mg(2+) is required as a cofactor.

The protein localises to the cytoplasm. The catalysed reaction is a 2'-deoxyribonucleoside 5'-diphosphate + ATP = a 2'-deoxyribonucleoside 5'-triphosphate + ADP. It carries out the reaction a ribonucleoside 5'-diphosphate + ATP = a ribonucleoside 5'-triphosphate + ADP. Functionally, major role in the synthesis of nucleoside triphosphates other than ATP. The ATP gamma phosphate is transferred to the NDP beta phosphate via a ping-pong mechanism, using a phosphorylated active-site intermediate. The polypeptide is Nucleoside diphosphate kinase (Staphylococcus haemolyticus (strain JCSC1435)).